The chain runs to 103 residues: Large ribosomal subunit protein uL24 (103 aa).

This sequence belongs to the universal ribosomal protein uL24 family. As to quaternary structure, part of the 50S ribosomal subunit.

Its function is as follows. One of two assembly initiator proteins, it binds directly to the 5'-end of the 23S rRNA, where it nucleates assembly of the 50S subunit. In terms of biological role, one of the proteins that surrounds the polypeptide exit tunnel on the outside of the subunit. This is Large ribosomal subunit protein uL24 from Roseobacter denitrificans (strain ATCC 33942 / OCh 114) (Erythrobacter sp. (strain OCh 114)).